The following is a 35-amino-acid chain: Photosystem II reaction center protein T (35 aa).

Residues Ala-3 to Phe-23 form a helical membrane-spanning segment.

Belongs to the PsbT family. PSII is composed of 1 copy each of membrane proteins PsbA, PsbB, PsbC, PsbD, PsbE, PsbF, PsbH, PsbI, PsbJ, PsbK, PsbL, PsbM, PsbT, PsbY, PsbZ, Psb30/Ycf12, at least 3 peripheral proteins of the oxygen-evolving complex and a large number of cofactors. It forms dimeric complexes.

Its subcellular location is the plastid. The protein resides in the chloroplast thylakoid membrane. Functionally, found at the monomer-monomer interface of the photosystem II (PS II) dimer, plays a role in assembly and dimerization of PSII. PSII is a light-driven water plastoquinone oxidoreductase, using light energy to abstract electrons from H(2)O, generating a proton gradient subsequently used for ATP formation. This Marchantia polymorpha (Common liverwort) protein is Photosystem II reaction center protein T.